The sequence spans 313 residues: Thymidylate synthase (313 aa).

The segment at 1–28 is disordered; that stretch reads MPVAGSELPRRPLPPAAQERDAEPRPPH. Residues 18–28 are compositionally biased toward basic and acidic residues; sequence QERDAEPRPPH. Arginine 50 contributes to the dUMP binding site. Serine 114 bears the Phosphoserine mark. DUMP-binding positions include 175-176, 195-196, 215-218, asparagine 226, and 256-258; these read RR, CH, RSGD, and HIY. Cysteine 195 (nucleophile) is an active-site residue. Position 218 (aspartate 218) interacts with (6R)-5,10-methylene-5,6,7,8-tetrahydrofolate. Glycyl lysine isopeptide (Lys-Gly) (interchain with G-Cter in SUMO2) cross-links involve residues lysine 287, lysine 292, and lysine 308. Alanine 312 is a (6R)-5,10-methylene-5,6,7,8-tetrahydrofolate binding site.

Belongs to the thymidylate synthase family. In terms of assembly, homodimer.

The protein resides in the nucleus. It localises to the cytoplasm. Its subcellular location is the mitochondrion. The protein localises to the mitochondrion matrix. It is found in the mitochondrion inner membrane. The enzyme catalyses dUMP + (6R)-5,10-methylene-5,6,7,8-tetrahydrofolate = 7,8-dihydrofolate + dTMP. It functions in the pathway pyrimidine metabolism; dTTP biosynthesis. Its function is as follows. Catalyzes the reductive methylation of 2'-deoxyuridine 5'-monophosphate (dUMP) to thymidine 5'-monophosphate (dTMP), using the cosubstrate, 5,10- methylenetetrahydrofolate (CH2H4folate) as a 1-carbon donor and reductant and contributes to the de novo mitochondrial thymidylate biosynthesis pathway. This Homo sapiens (Human) protein is Thymidylate synthase.